A 304-amino-acid polypeptide reads, in one-letter code: Phosphoribosylaminoimidazole-succinocarboxamide synthase (304 aa).

The protein belongs to the SAICAR synthetase family.

The catalysed reaction is 5-amino-1-(5-phospho-D-ribosyl)imidazole-4-carboxylate + L-aspartate + ATP = (2S)-2-[5-amino-1-(5-phospho-beta-D-ribosyl)imidazole-4-carboxamido]succinate + ADP + phosphate + 2 H(+). Its pathway is purine metabolism; IMP biosynthesis via de novo pathway; 5-amino-1-(5-phospho-D-ribosyl)imidazole-4-carboxamide from 5-amino-1-(5-phospho-D-ribosyl)imidazole-4-carboxylate: step 1/2. The protein is Phosphoribosylaminoimidazole-succinocarboxamide synthase of Streptomyces griseus subsp. griseus (strain JCM 4626 / CBS 651.72 / NBRC 13350 / KCC S-0626 / ISP 5235).